The following is a 227-amino-acid chain: MIDMLKKGLEKTLKFFPRLEDLAEVFDPLHRGEAFASSPNPRSIERKYILNVPTLKAKSSVEKITDGQSYEILGQPTGFEISEVKTAEGEIKIRIDFVNNIFADVMKIMCNVGLVLMMVFAAFYFAGINPADNLNLEVQKWSEPAEKFWSDVKGIHSTGYSWFLQNPLDPENAILLSVTLLALTPVIGILLTIPRSTGALRVIFLVIAVEFVYAIFRVMMGGGPMGH.

The next 3 helical transmembrane spans lie at 109–128 (MCNV…FAGI), 173–192 (AILL…ILLT), and 199–221 (ALRV…VMMG).

It is found in the cell membrane. This is an uncharacterized protein from Archaeoglobus fulgidus (strain ATCC 49558 / DSM 4304 / JCM 9628 / NBRC 100126 / VC-16).